Consider the following 449-residue polypeptide: MDARISPEIPGIIQPGNVTQDLKMLVCKLLNSPKPSKTFPGSQPVSFQHSDIRDKLVAQDYYVCEKTDGLRVLMLVVVNPITGEQGCFMIDRENNYYLVNGFHFPRLPQKKKEELLETSQNGTLIDGELVIQKNPMTKLQELRYLMFDCLAINGRSLVQSPTSSRLAHLGKEFYKPYYDLRSIYPDKCATFPFKLSMKHMDFSYSLVKVANSLDKLPHLSDGLIFTPVRTPYAVGGKDSLLLKWKPEQENSVDFKLILEIPMTEDNSVAKKDPRRWYYNYDAKPTFALYVWQGGSDVNTKLQNFEQPFDKREMQVLEKTYKRFAELSISDEQWQELKNLEEPLNGRIVECTKDPETGSWTMLRFRDDKLNGNHTSVVQKVLESISDSVTIDDLAESVPEIKSAWDERKNGAYQHHSSSFSESRQQPKAEPVAEKKQTEPKYVDDDDWSD.

Catalysis depends on lysine 66, which acts as the N6-GMP-lysine intermediate. Positions 405-449 (DERKNGAYQHHSSSFSESRQQPKAEPVAEKKQTEPKYVDDDDWSD) are disordered. Residues 414–423 (HHSSSFSESR) show a composition bias toward polar residues. Over residues 424-442 (QQPKAEPVAEKKQTEPKYV) the composition is skewed to basic and acidic residues.

Belongs to the eukaryotic GTase family. In terms of assembly, heterodimer. The mRNA-capping enzyme is composed of two separate chains alpha and beta, respectively a mRNA guanylyltransferase and an mRNA 5'-triphosphate monophosphatase.

It localises to the nucleus. It carries out the reaction a 5'-end diphospho-ribonucleoside in mRNA + GTP + H(+) = a 5'-end (5'-triphosphoguanosine)-ribonucleoside in mRNA + diphosphate. In terms of biological role, second step of mRNA capping. Transfer of the GMP moiety of GTP to the 5'-end of RNA via an enzyme-GMP covalent reaction intermediate. This Candida glabrata (strain ATCC 2001 / BCRC 20586 / JCM 3761 / NBRC 0622 / NRRL Y-65 / CBS 138) (Yeast) protein is mRNA-capping enzyme subunit alpha (CEG1).